Here is a 179-residue protein sequence, read N- to C-terminus: Large ribosomal subunit protein uL5 (179 aa).

Belongs to the universal ribosomal protein uL5 family. As to quaternary structure, part of the 50S ribosomal subunit; part of the 5S rRNA/L5/L18/L25 subcomplex. Contacts the 5S rRNA and the P site tRNA. Forms a bridge to the 30S subunit in the 70S ribosome.

This is one of the proteins that bind and probably mediate the attachment of the 5S RNA into the large ribosomal subunit, where it forms part of the central protuberance. In the 70S ribosome it contacts protein S13 of the 30S subunit (bridge B1b), connecting the 2 subunits; this bridge is implicated in subunit movement. Contacts the P site tRNA; the 5S rRNA and some of its associated proteins might help stabilize positioning of ribosome-bound tRNAs. The sequence is that of Large ribosomal subunit protein uL5 from Alkaliphilus oremlandii (strain OhILAs) (Clostridium oremlandii (strain OhILAs)).